The following is a 490-amino-acid chain: GTPase Der (490 aa).

EngA-type G domains follow at residues 3–166 (PVVA…AEAM) and 200–373 (IKLA…DSAT). GTP is bound by residues 9-16 (GRPNVGKS), 56-60 (DTGGI), 118-121 (NKVD), 206-213 (GKPNVGKS), 253-257 (DTAGV), and 318-321 (NKWD). Residues 374-458 (RRVSTSMLTR…PIQLRFQEGG (85 aa)) enclose the KH-like domain.

The protein belongs to the TRAFAC class TrmE-Era-EngA-EngB-Septin-like GTPase superfamily. EngA (Der) GTPase family. Associates with the 50S ribosomal subunit.

GTPase that plays an essential role in the late steps of ribosome biogenesis. The polypeptide is GTPase Der (Shewanella halifaxensis (strain HAW-EB4)).